The following is a 524-amino-acid chain: Probable metalloreductase AIM14 (524 aa).

The next 7 membrane-spanning stretches (helical) occupy residues 24 to 44 (VNIK…VLSI), 69 to 89 (SIPF…LSIF), 104 to 121 (RLGR…FISL), 143 to 163 (WISR…LYKW), 179 to 199 (FLGV…VNVM), 206 to 226 (LFYI…AFHA), and 230 to 250 (VPLL…QRFF). Residues 105–222 (LGRMAYCLVP…VTLWMFVVLI (118 aa)) form the Ferric oxidoreductase domain. Residues 248-372 (RFFKSYYLHD…GGSGISFGLP (125 aa)) form the FAD-binding FR-type domain.

This sequence belongs to the ferric reductase (FRE) family. AIM14 subfamily.

It localises to the membrane. Its function is as follows. Probable cell surface metalloreductase. May be involved in iron or copper homeostasis. The chain is Probable metalloreductase AIM14 (AIM14) from Scheffersomyces stipitis (strain ATCC 58785 / CBS 6054 / NBRC 10063 / NRRL Y-11545) (Yeast).